Reading from the N-terminus, the 418-residue chain is Deubiquitinase and deneddylase Dub1 (418 aa).

Residues 1 to 11 (MLSPTNSTSKT) are compositionally biased toward polar residues. The interval 1-23 (MLSPTNSTSKTAPVPPQDSSKPV) is disordered. A helical membrane pass occupies residues 40–60 (TALVVLLVVVTLGLILLFYSF). The segment at 72–145 (TRPSTKEQPT…LPPKAPKPVK (74 aa)) is disordered. A compositionally biased stretch (pro residues) spans 86–141 (VPLPSPPLAVPRPSTPPPPVISRPSMPPAPTPAISPPSTPSAPKPSTPPPLPPKAP). Residues histidine 288, aspartate 305, and cysteine 358 contribute to the active site.

It belongs to the peptidase C48 family.

The protein localises to the secreted. The protein resides in the host cell. It is found in the membrane. Effector proteins function to alter host cell physiology and promote bacterial survival in host tissues. This protease possesses deubiquitinating and deneddylating activities. This is Deubiquitinase and deneddylase Dub1 (cdu1) from Chlamydia trachomatis serovar E (strain Sweden2).